The following is a 270-amino-acid chain: Acyl-[acyl-carrier-protein]--UDP-N-acetylglucosamine O-acyltransferase (270 aa).

Belongs to the transferase hexapeptide repeat family. LpxA subfamily. As to quaternary structure, homotrimer.

It localises to the cytoplasm. The catalysed reaction is a (3R)-hydroxyacyl-[ACP] + UDP-N-acetyl-alpha-D-glucosamine = a UDP-3-O-[(3R)-3-hydroxyacyl]-N-acetyl-alpha-D-glucosamine + holo-[ACP]. The protein operates within glycolipid biosynthesis; lipid IV(A) biosynthesis; lipid IV(A) from (3R)-3-hydroxytetradecanoyl-[acyl-carrier-protein] and UDP-N-acetyl-alpha-D-glucosamine: step 1/6. Involved in the biosynthesis of lipid A, a phosphorylated glycolipid that anchors the lipopolysaccharide to the outer membrane of the cell. This is Acyl-[acyl-carrier-protein]--UDP-N-acetylglucosamine O-acyltransferase from Sinorhizobium fredii (strain NBRC 101917 / NGR234).